The following is a 432-amino-acid chain: D-amino acid dehydrogenase (432 aa).

An FAD-binding site is contributed by valine 3–tyrosine 17.

Belongs to the DadA oxidoreductase family. It depends on FAD as a cofactor.

It catalyses the reaction a D-alpha-amino acid + A + H2O = a 2-oxocarboxylate + AH2 + NH4(+). It functions in the pathway amino-acid degradation; D-alanine degradation; NH(3) and pyruvate from D-alanine: step 1/1. Functionally, oxidative deamination of D-amino acids. In Stutzerimonas stutzeri (strain A1501) (Pseudomonas stutzeri), this protein is D-amino acid dehydrogenase.